We begin with the raw amino-acid sequence, 98 residues long: Large ribosomal subunit protein uL23 (98 aa).

This sequence belongs to the universal ribosomal protein uL23 family. As to quaternary structure, part of the 50S ribosomal subunit. Contacts protein L29, and trigger factor when it is bound to the ribosome.

Its function is as follows. One of the early assembly proteins it binds 23S rRNA. One of the proteins that surrounds the polypeptide exit tunnel on the outside of the ribosome. Forms the main docking site for trigger factor binding to the ribosome. This chain is Large ribosomal subunit protein uL23, found in Parafrankia sp. (strain EAN1pec).